Consider the following 275-residue polypeptide: NH(3)-dependent NAD(+) synthetase (275 aa).

50-57 (GISGGVDS) provides a ligand contact to ATP. Asp56 contacts Mg(2+). Residue Arg147 participates in deamido-NAD(+) binding. Thr167 is an ATP binding site. Glu172 contributes to the Mg(2+) binding site. Residues Lys180 and Asp187 each coordinate deamido-NAD(+). Positions 196 and 218 each coordinate ATP. Position 267 to 268 (267 to 268 (HK)) interacts with deamido-NAD(+).

Belongs to the NAD synthetase family. As to quaternary structure, homodimer.

The enzyme catalyses deamido-NAD(+) + NH4(+) + ATP = AMP + diphosphate + NAD(+) + H(+). It functions in the pathway cofactor biosynthesis; NAD(+) biosynthesis; NAD(+) from deamido-NAD(+) (ammonia route): step 1/1. Its function is as follows. Catalyzes the ATP-dependent amidation of deamido-NAD to form NAD. Uses ammonia as a nitrogen source. In Pseudomonas entomophila (strain L48), this protein is NH(3)-dependent NAD(+) synthetase.